The following is a 151-amino-acid chain: Probable ubiquitin-conjugating enzyme E2 W-B (151 aa).

Residues 3 to 151 (SMQKRLQKEL…TKWWYHDDTC (149 aa)) form the UBC core domain. The active-site Glycyl thioester intermediate is C91.

The protein belongs to the ubiquitin-conjugating enzyme family.

It localises to the nucleus. It catalyses the reaction S-ubiquitinyl-[E1 ubiquitin-activating enzyme]-L-cysteine + [E2 ubiquitin-conjugating enzyme]-L-cysteine = [E1 ubiquitin-activating enzyme]-L-cysteine + S-ubiquitinyl-[E2 ubiquitin-conjugating enzyme]-L-cysteine.. The enzyme catalyses S-ubiquitinyl-[E1 ubiquitin-activating enzyme]-L-cysteine + [acceptor protein]-N-terminal-amino acid = [E1 ubiquitin-activating enzyme]-L-cysteine + N-terminal-ubiquitinyl-[acceptor protein].. It participates in protein modification; protein ubiquitination. Its function is as follows. Accepts ubiquitin from the E1 complex and catalyzes its covalent attachment to other proteins. Catalyzes monoubiquitination. Involved in degradation of misfolded chaperone substrate and DNA repair. The sequence is that of Probable ubiquitin-conjugating enzyme E2 W-B (ube2wb) from Danio rerio (Zebrafish).